Here is a 212-residue protein sequence, read N- to C-terminus: Agamous-like MADS-box protein MADS9 (212 aa).

The MADS-box domain occupies 1–61 (MGRGKIEIKR…GKMHEYCSPS (61 aa)). Residues 84–170 (HENLNNELDR…NYIVHHQGMP (87 aa)) form the K-box domain.

In terms of tissue distribution, expressed during flower development in stamens and petals.

It is found in the nucleus. Probable transcription factor that may play role in specifying stamen and petal organ identity. In Vitis vinifera (Grape), this protein is Agamous-like MADS-box protein MADS9.